The following is a 242-amino-acid chain: NAD-dependent protein deacylase 1 (242 aa).

In terms of domain architecture, Deacetylase sirtuin-type spans 1–242 (MDFKILKEKL…FAMKFEEKEG (242 aa)). Position 21–40 (21–40 (GAGISKESGIPTFRGEDGLW)) interacts with NAD(+). Residues Tyr65 and Arg68 each contribute to the substrate site. Position 99-102 (99-102 (QNVD)) interacts with NAD(+). Catalysis depends on His117, which acts as the Proton acceptor. Cys125, Cys128, Cys146, and Cys149 together coordinate Zn(2+). Residues 186 to 188 (GTS) and Glu241 each bind NAD(+).

Belongs to the sirtuin family. Class III subfamily. The cofactor is Zn(2+).

It is found in the cytoplasm. It catalyses the reaction N(6)-acetyl-L-lysyl-[protein] + NAD(+) + H2O = 2''-O-acetyl-ADP-D-ribose + nicotinamide + L-lysyl-[protein]. The catalysed reaction is N(6)-succinyl-L-lysyl-[protein] + NAD(+) + H2O = 2''-O-succinyl-ADP-D-ribose + nicotinamide + L-lysyl-[protein]. In terms of biological role, NAD-dependent lysine deacetylase and desuccinylase that specifically removes acetyl and succinyl groups on target proteins. Modulates the activities of several proteins which are inactive in their acylated form. The sequence is that of NAD-dependent protein deacylase 1 from Caldanaerobacter subterraneus subsp. tengcongensis (strain DSM 15242 / JCM 11007 / NBRC 100824 / MB4) (Thermoanaerobacter tengcongensis).